Here is a 295-residue protein sequence, read N- to C-terminus: MEIRRRPPNPKVRVAHLEYAVPHDDEEPRHILEKIVWEKDREIDAARDKVPLDNLKQQIAKLPPTKDFLGALQAAATKPAVIAEVKKASPSKGVIREDFDPVAIAKAYASGGASCLSVLTDKTFFQGGFDVLVEVRQAVDLPLLCKEFVLSPYQLFQARAAGADAVLLIAAILSDQDLRYLNKAAAALGLTVLVEVHDATEMDRVLSIGGFPLIGINNRDLTSFETDLATTERLLVDFNDRLKQQGVLLVSESGLFSRADLDRVQAAGAGAVLVGEALMRQQDVEAGLVQLIQAG.

This sequence belongs to the TrpC family.

It carries out the reaction 1-(2-carboxyphenylamino)-1-deoxy-D-ribulose 5-phosphate + H(+) = (1S,2R)-1-C-(indol-3-yl)glycerol 3-phosphate + CO2 + H2O. The protein operates within amino-acid biosynthesis; L-tryptophan biosynthesis; L-tryptophan from chorismate: step 4/5. The chain is Indole-3-glycerol phosphate synthase from Synechococcus sp. (strain CC9605).